Here is a 408-residue protein sequence, read N- to C-terminus: Chaperonin GroEL (408 aa).

Residues 30 to 33, lysine 51, and 87 to 91 contribute to the ATP site; these read TLGP and DGTTT.

It belongs to the chaperonin (HSP60) family. In terms of assembly, forms a cylinder of 14 subunits composed of two heptameric rings stacked back-to-back. Interacts with the co-chaperonin GroES.

The protein resides in the cytoplasm. It carries out the reaction ATP + H2O + a folded polypeptide = ADP + phosphate + an unfolded polypeptide.. Together with its co-chaperonin GroES, plays an essential role in assisting protein folding. The GroEL-GroES system forms a nano-cage that allows encapsulation of the non-native substrate proteins and provides a physical environment optimized to promote and accelerate protein folding. The polypeptide is Chaperonin GroEL (Rickettsia rickettsii).